The following is an 84-amino-acid chain: Large ribosomal subunit protein bL27 (84 aa).

The tract at residues 1–20 is disordered; it reads MAHKKGGGSTKNGRDSNPKY.

The protein belongs to the bacterial ribosomal protein bL27 family.

This chain is Large ribosomal subunit protein bL27 (rpmA), found in Prosthecochloris vibrioformis (Chlorobium vibrioforme).